A 397-amino-acid chain; its full sequence is Chorismate synthase (397 aa).

Residues Arg40 and Arg46 each coordinate NADP(+). FMN is bound by residues 129 to 131 (RAS), 257 to 258 (QA), Gly302, 317 to 321 (KPIAT), and Arg343.

It belongs to the chorismate synthase family. In terms of assembly, homotetramer. It depends on FMNH2 as a cofactor.

It carries out the reaction 5-O-(1-carboxyvinyl)-3-phosphoshikimate = chorismate + phosphate. The protein operates within metabolic intermediate biosynthesis; chorismate biosynthesis; chorismate from D-erythrose 4-phosphate and phosphoenolpyruvate: step 7/7. In terms of biological role, catalyzes the anti-1,4-elimination of the C-3 phosphate and the C-6 proR hydrogen from 5-enolpyruvylshikimate-3-phosphate (EPSP) to yield chorismate, which is the branch point compound that serves as the starting substrate for the three terminal pathways of aromatic amino acid biosynthesis. This reaction introduces a second double bond into the aromatic ring system. In Prosthecochloris aestuarii (strain DSM 271 / SK 413), this protein is Chorismate synthase.